The primary structure comprises 250 residues: Pyrroloquinoline-quinone synthase (250 aa).

Belongs to the PqqC family.

It carries out the reaction 6-(2-amino-2-carboxyethyl)-7,8-dioxo-1,2,3,4,7,8-hexahydroquinoline-2,4-dicarboxylate + 3 O2 = pyrroloquinoline quinone + 2 H2O2 + 2 H2O + H(+). The protein operates within cofactor biosynthesis; pyrroloquinoline quinone biosynthesis. Ring cyclization and eight-electron oxidation of 3a-(2-amino-2-carboxyethyl)-4,5-dioxo-4,5,6,7,8,9-hexahydroquinoline-7,9-dicarboxylic-acid to PQQ. The chain is Pyrroloquinoline-quinone synthase from Xanthomonas axonopodis pv. citri (strain 306).